The sequence spans 89 residues: Barrier-to-autointegration factor (89 aa).

Met1 carries the N-acetylmethionine modification. N-acetylthreonine; in Barrier-to-autointegration factor, N-terminally processed is present on Thr2. A phosphothreonine; by VRK1 and VRK2 mark is found at Thr2 and Thr3. Ser4 carries the post-translational modification Phosphoserine; by VRK1 and VRK2. In terms of domain architecture, HhH spans 20 to 35 (VGSLAGIGDVLSKRLE).

It belongs to the BAF family. In terms of assembly, homodimer. Heterodimerizes with BANF2. Interacts with ANKLE2/LEM4, leading to decreased phosphorylation by VRK1 and promoting dephosphorylation by protein phosphatase 2A (PP2A). Binds non-specifically to double-stranded DNA, and is found as a hexamer or dodecamer upon DNA binding. Binds to LEM domain-containing nuclear proteins such as LEMD3/MAN1, TMPO/LAP2 and EMD (emerin). Interacts with ANKLE1 (via LEM domain); the interaction may favor BANF1 dimerization. Interacts with CRX and LMNA (lamin-A). Binds linker histone H1.1 and core histones H3. Interacts with LEMD2 (via LEM domain). Interacts with PARP1; interaction takes place in response to oxidative DNA damage. In terms of processing, ser-4 is the major site of phosphorylation as compared to Thr-2 and Thr-3. Phosphorylation on Thr-2; Thr-3 and Ser-4 disrupts its ability to bind DNA and reduces its ability to bind LEM domain-containing proteins. Non phosphorylated BAF seems to enhance binding between EMD and LMNA. Dephosphorylated by protein phosphatase 2A (PP2A) following interaction with ANKLE2/LEM4 during mitotic exit, leading to mitotic nuclear envelope reassembly.

It is found in the nucleus. The protein localises to the chromosome. It localises to the nucleus envelope. The protein resides in the cytoplasm. Non-specific DNA-binding protein that plays key roles in mitotic nuclear reassembly, chromatin organization, DNA damage response, gene expression and intrinsic immunity against foreign DNA. Contains two non-specific double-stranded DNA (dsDNA)-binding sites which promote DNA cross-bridging. Plays a key role in nuclear membrane reformation at the end of mitosis by driving formation of a single nucleus in a spindle-independent manner. Transiently cross-bridges anaphase chromosomes via its ability to bridge distant DNA sites, leading to the formation of a dense chromatin network at the chromosome ensemble surface that limits membranes to the surface. Also acts as a negative regulator of innate immune activation by restricting CGAS activity toward self-DNA upon acute loss of nuclear membrane integrity. Outcompetes CGAS for DNA-binding, thereby preventing CGAS activation and subsequent damaging autoinflammatory responses. Also involved in DNA damage response: interacts with PARP1 in response to oxidative stress, thereby inhibiting the ADP-ribosyltransferase activity of PARP1. Involved in the recognition of exogenous dsDNA in the cytosol: associates with exogenous dsDNA immediately after its appearance in the cytosol at endosome breakdown and is required to avoid autophagy. This is Barrier-to-autointegration factor from Mus musculus (Mouse).